A 131-amino-acid polypeptide reads, in one-letter code: Small ribosomal subunit protein uS8 (131 aa).

Belongs to the universal ribosomal protein uS8 family. Part of the 30S ribosomal subunit. Contacts proteins S5 and S12.

Its function is as follows. One of the primary rRNA binding proteins, it binds directly to 16S rRNA central domain where it helps coordinate assembly of the platform of the 30S subunit. In Sulfurimonas denitrificans (strain ATCC 33889 / DSM 1251) (Thiomicrospira denitrificans (strain ATCC 33889 / DSM 1251)), this protein is Small ribosomal subunit protein uS8.